The primary structure comprises 229 residues: MTIGIIGAMDEEIALLKQQMKDMEELEVAGCYFYTGHLHDKSVVLLLSGIGKVNAAMATTILHERFSPSMIINTGSAGGFASDLQVGDVVISEEVLHHDVDATAFDYVYGQVPGMPATYKADQRLVELSSEVMKDIEINSRIGVIATGDSFMQRKDQTDIVKQRFPGMLALEMEAASIAQVCYRYNTPFVITRALSDIAGQESSVSFDQFLQTAGKNAAQLIINMVKKI.

Glu-12 serves as the catalytic Proton acceptor. Substrate is bound by residues Gly-78, Met-152, and Met-173–Glu-174. Asp-197 serves as the catalytic Proton donor.

It belongs to the PNP/UDP phosphorylase family. MtnN subfamily.

It carries out the reaction S-adenosyl-L-homocysteine + H2O = S-(5-deoxy-D-ribos-5-yl)-L-homocysteine + adenine. The catalysed reaction is S-methyl-5'-thioadenosine + H2O = 5-(methylsulfanyl)-D-ribose + adenine. It catalyses the reaction 5'-deoxyadenosine + H2O = 5-deoxy-D-ribose + adenine. The protein operates within amino-acid biosynthesis; L-methionine biosynthesis via salvage pathway; S-methyl-5-thio-alpha-D-ribose 1-phosphate from S-methyl-5'-thioadenosine (hydrolase route): step 1/2. Catalyzes the irreversible cleavage of the glycosidic bond in both 5'-methylthioadenosine (MTA) and S-adenosylhomocysteine (SAH/AdoHcy) to adenine and the corresponding thioribose, 5'-methylthioribose and S-ribosylhomocysteine, respectively. Also cleaves 5'-deoxyadenosine, a toxic by-product of radical S-adenosylmethionine (SAM) enzymes, into 5-deoxyribose and adenine. The protein is 5'-methylthioadenosine/S-adenosylhomocysteine nucleosidase of Oceanobacillus iheyensis (strain DSM 14371 / CIP 107618 / JCM 11309 / KCTC 3954 / HTE831).